The sequence spans 580 residues: Glutamine--tRNA ligase (580 aa).

The 'HIGH' region signature appears at 51–61 (PEPNGYLHIGH). Residues 52–54 (EPN) and 58–64 (HIGHAKS) each bind ATP. Residues D84 and Y233 each coordinate L-glutamine. Residues T252 and 287–288 (RL) contribute to the ATP site. A 'KMSKS' region motif is present at residues 294–298 (ITSKR).

The protein belongs to the class-I aminoacyl-tRNA synthetase family. As to quaternary structure, monomer.

The protein localises to the cytoplasm. It carries out the reaction tRNA(Gln) + L-glutamine + ATP = L-glutaminyl-tRNA(Gln) + AMP + diphosphate. The chain is Glutamine--tRNA ligase from Ralstonia nicotianae (strain ATCC BAA-1114 / GMI1000) (Ralstonia solanacearum).